Reading from the N-terminus, the 100-residue chain is Ubiquinol-cytochrome-C reductase complex subunit IX, mitochondrial (100 aa).

The transit peptide at Met-1 to Phe-30 directs the protein to the mitochondrion. A helical membrane pass occupies residues Leu-66–Ala-86.

As to quaternary structure, plants bc1 complex contains 10 subunits; 3 respiratory subunits, 2 core proteins and 5 low-molecular weight proteins.

Its subcellular location is the mitochondrion inner membrane. Its function is as follows. This is a component of the ubiquinol-cytochrome c reductase complex (complex III or cytochrome b-c1 complex), which is part of the mitochondrial respiratory chain. This Euglena gracilis protein is Ubiquinol-cytochrome-C reductase complex subunit IX, mitochondrial.